Consider the following 367-residue polypeptide: Molybdopterin synthase catalytic subunit (367 aa).

Residues 101–102 (HR), Lys117, and 124–126 (KKE) contribute to the substrate site. The interval 326–345 (HFTKREPSSMEAAPPKKIRK) is disordered.

Belongs to the MoaE family. MOCS2B subfamily. In terms of assembly, heterotetramer; composed of 2 small (Mocs2A) and 2 large (Mocs2B) subunits.

The protein resides in the cytoplasm. It carries out the reaction 2 [molybdopterin-synthase sulfur-carrier protein]-C-terminal-Gly-aminoethanethioate + cyclic pyranopterin phosphate + H2O = molybdopterin + 2 [molybdopterin-synthase sulfur-carrier protein]-C-terminal Gly-Gly + 2 H(+). The protein operates within cofactor biosynthesis; molybdopterin biosynthesis. Functionally, catalytic subunit of the molybdopterin synthase complex, a complex that catalyzes the conversion of precursor Z into molybdopterin. Acts by mediating the incorporation of 2 sulfur atoms from thiocarboxylated Mocs2A into precursor Z to generate a dithiolene group. The chain is Molybdopterin synthase catalytic subunit from Drosophila sechellia (Fruit fly).